We begin with the raw amino-acid sequence, 518 residues long: GMP synthase [glutamine-hydrolyzing] (518 aa).

One can recognise a Glutamine amidotransferase type-1 domain in the interval 8–201; the sequence is TVLIIDFGSQ…VCKISGIKNN (194 aa). Residue Cys85 is the Nucleophile of the active site. Active-site residues include His175 and Glu177. The 192-residue stretch at 202–393 folds into the GMPS ATP-PPase domain; the sequence is WSMAAYRDQA…LGLPEEFIKR (192 aa). Residue 229–235 participates in ATP binding; that stretch reads SGGVDSS.

In terms of assembly, homodimer.

The enzyme catalyses XMP + L-glutamine + ATP + H2O = GMP + L-glutamate + AMP + diphosphate + 2 H(+). Its pathway is purine metabolism; GMP biosynthesis; GMP from XMP (L-Gln route): step 1/1. Functionally, catalyzes the synthesis of GMP from XMP. This is GMP synthase [glutamine-hydrolyzing] from Bartonella bacilliformis (strain ATCC 35685 / KC583 / Herrer 020/F12,63).